We begin with the raw amino-acid sequence, 154 residues long: Myoglobin (154 aa).

The Globin domain occupies 2 to 148; that stretch reads GLSDGEWQLV…FRNDIAAKYK (147 aa). Serine 4 is modified (phosphoserine). Histidine 65 lines the nitrite pocket. O2 is bound at residue histidine 65. A Phosphothreonine modification is found at threonine 68. Residue histidine 94 coordinates heme b.

Belongs to the globin family. Monomeric.

It is found in the cytoplasm. It localises to the sarcoplasm. The enzyme catalyses Fe(III)-heme b-[protein] + nitric oxide + H2O = Fe(II)-heme b-[protein] + nitrite + 2 H(+). The catalysed reaction is H2O2 + AH2 = A + 2 H2O. Monomeric heme protein which primary function is to store oxygen and facilitate its diffusion within muscle tissues. Reversibly binds oxygen through a pentacoordinated heme iron and enables its timely and efficient release as needed during periods of heightened demand. Depending on the oxidative conditions of tissues and cells, and in addition to its ability to bind oxygen, it also has a nitrite reductase activity whereby it regulates the production of bioactive nitric oxide. Under stress conditions, like hypoxia and anoxia, it also protects cells against reactive oxygen species thanks to its pseudoperoxidase activity. This is Myoglobin (MB) from Lagostomus maximus (Plains viscacha).